The following is a 310-amino-acid chain: Probable mitochondrial import receptor subunit TOM40-2 (310 aa).

N-acetylmethionine is present on M1.

The protein belongs to the Tom40 family. As to quaternary structure, forms part of the preprotein translocase complex of the outer mitochondrial membrane (TOM complex) which consists of at least 6 different proteins (TOM5, TOM6, TOM7, TOM20, TOM22/TOM9 and TOM40). Present in a large lipid-enriched complex called mitochondrial transmembrane lipoprotein (MTL) complex made of proteins located in the two mitochondrial membranes, including the TOM complex and the core components of the MICOS complex and containing at least digalactosyldiacylglycerol (DGDG). Binds to MIC60. Component of a mitochondrial large protein complex that contains, at least, MIC60, DGS1, TOM40, TOM20 proteins, and petC/RISP. Expressed in roots, flowers, young cotyledons and leaves.

The protein resides in the mitochondrion outer membrane. Its function is as follows. Central component of the receptor complex responsible for the recognition and translocation of cytosolically synthesized mitochondrial preproteins. Together with TOM22 functions as the transit peptide receptor at the surface of the mitochondrion outer membrane and facilitates the movement of preproteins into the translocation pore. Directly involved in the pore formation. The polypeptide is Probable mitochondrial import receptor subunit TOM40-2 (Arabidopsis thaliana (Mouse-ear cress)).